The following is a 193-amino-acid chain: Bcl-2-binding component 3 (193 aa).

Disordered regions lie at residues 1–32 (MARA…RLMP) and 71–131 (ALGG…VEEE). Ser-10 carries the phosphoserine modification. A BH3 motif is present at residues 137-151 (IGAQLRRMADDLNAQ).

The protein belongs to the Bcl-2 family. Interacts with MCL1 and BCL2A1. Interacts (via BH3 domain) with BCL2 and BCL2L1/BCL-XL. Interacts (via BH3 domain) with NOL3/ARC (via CARD domain); this interaction prevents BBC3 association with BCL2 and results in CASP8 activation.

It localises to the mitochondrion. Its function is as follows. Essential mediator of p53/TP53-dependent and p53/TP53-independent apoptosis. Promotes partial unfolding of BCL2L1 and dissociation of BCL2L1 from p53/TP53, releasing the bound p53/TP53 to induce apoptosis. Regulates ER stress-induced neuronal apoptosis. In Rattus norvegicus (Rat), this protein is Bcl-2-binding component 3 (Bbc3).